Here is a 238-residue protein sequence, read N- to C-terminus: tRNA1(Val) (adenine(37)-N6)-methyltransferase (238 aa).

This sequence belongs to the methyltransferase superfamily. tRNA (adenine-N(6)-)-methyltransferase family.

It localises to the cytoplasm. It catalyses the reaction adenosine(37) in tRNA1(Val) + S-adenosyl-L-methionine = N(6)-methyladenosine(37) in tRNA1(Val) + S-adenosyl-L-homocysteine + H(+). Functionally, specifically methylates the adenine in position 37 of tRNA(1)(Val) (anticodon cmo5UAC). The chain is tRNA1(Val) (adenine(37)-N6)-methyltransferase from Shewanella baltica (strain OS223).